The primary structure comprises 179 residues: Proteasome chaperone 3 (179 aa).

The protein belongs to the PSMG3 family. In terms of assembly, component of the 20S proteasome chaperone. Forms a heterodimer with POC4 that binds to proteasome precursors. Interacts with POP2.

Its function is as follows. Involved in 20S proteasome assembly, facilitating the alpha-ring formation. This is Proteasome chaperone 3 (IRC25) from Saccharomyces cerevisiae (strain ATCC 204508 / S288c) (Baker's yeast).